The chain runs to 101 residues: Phosphoribosyl-AMP cyclohydrolase (101 aa).

Asp71 lines the Mg(2+) pocket. Zn(2+) is bound at residue Cys72. Residues Asp73 and Asp75 each coordinate Mg(2+). Zn(2+) contacts are provided by Cys88 and Cys95.

This sequence belongs to the PRA-CH family. In terms of assembly, homodimer. Requires Mg(2+) as cofactor. Zn(2+) serves as cofactor.

Its subcellular location is the cytoplasm. It carries out the reaction 1-(5-phospho-beta-D-ribosyl)-5'-AMP + H2O = 1-(5-phospho-beta-D-ribosyl)-5-[(5-phospho-beta-D-ribosylamino)methylideneamino]imidazole-4-carboxamide. The protein operates within amino-acid biosynthesis; L-histidine biosynthesis; L-histidine from 5-phospho-alpha-D-ribose 1-diphosphate: step 3/9. Catalyzes the hydrolysis of the adenine ring of phosphoribosyl-AMP. This Bacillus cereus (strain ATCC 10987 / NRS 248) protein is Phosphoribosyl-AMP cyclohydrolase.